We begin with the raw amino-acid sequence, 451 residues long: Tubulin alpha-1A chain (451 aa).

Positions 10, 11, 12, and 15 each coordinate GTP. K40 carries the N6-acetyllysine modification. 13 residues coordinate GTP: E71, A99, S140, G143, G144, T145, G146, T179, E183, N206, Y224, N228, and L252. E71 serves as a coordination point for Mg(2+). E254 is a catalytic residue. Residue Y282 is modified to 3'-nitrotyrosine. Position 439 is a phosphoserine (S439). 2 positions are modified to 5-glutamyl polyglutamate: E443 and E445. Position 451 is a 3'-nitrotyrosine (Y451).

This sequence belongs to the tubulin family. As to quaternary structure, heterodimer of alpha- and beta-tubulin. A typical microtubule is a hollow water-filled tube with an outer diameter of 25 nm and an inner diameter of 15 nM. Alpha-beta heterodimers associate head-to-tail to form protofilaments running lengthwise along the microtubule wall with the beta-tubulin subunit facing the microtubule plus end conferring a structural polarity. Microtubules usually have 13 protofilaments but different protofilament numbers can be found in some organisms and specialized cells. Interacts with gamma-tubulin; the interaction allows microtubules to nucleate from the gamma-tubulin ring complex (gTuRC). Nascent microtubule interacts (via alpha-tubulin MREC motif) with TTC5/STRAP; this interaction may result in tubulin mRNA-targeted degradation. Component of sperm flagellar doublet microtubules. The cofactor is Mg(2+). In terms of processing, some glutamate residues at the C-terminus are polyglycylated, resulting in polyglycine chains on the gamma-carboxyl group. Glycylation is mainly limited to tubulin incorporated into axonemes (cilia and flagella) whereas glutamylation is prevalent in neuronal cells, centrioles, axonemes, and the mitotic spindle. Both modifications can coexist on the same protein on adjacent residues, and lowering polyglycylation levels increases polyglutamylation, and reciprocally. Cilia and flagella glycylation is required for their stability and maintenance. Flagella glycylation controls sperm motility. Post-translationally, some glutamate residues at the C-terminus are polyglutamylated, resulting in polyglutamate chains on the gamma-carboxyl group. Polyglutamylation plays a key role in microtubule severing by spastin (SPAST). SPAST preferentially recognizes and acts on microtubules decorated with short polyglutamate tails: severing activity by SPAST increases as the number of glutamates per tubulin rises from one to eight, but decreases beyond this glutamylation threshold. Glutamylation is also involved in cilia motility. Acetylation of alpha chains at Lys-40 is located inside the microtubule lumen. This modification has been correlated with increased microtubule stability, intracellular transport and ciliary assembly. In terms of processing, methylation of alpha chains at Lys-40 is found in mitotic microtubules and is required for normal mitosis and cytokinesis contributing to genomic stability. Post-translationally, nitration of Tyr-451 is irreversible and interferes with normal dynein intracellular distribution. Undergoes a tyrosination/detyrosination cycle, the cyclic removal and re-addition of a C-terminal tyrosine residue by the enzymes tubulin tyrosine carboxypeptidase (MATCAP1, VASH1 or VASH2) and tubulin tyrosine ligase (TTL), respectively. In terms of processing, tyrosination promotes microtubule interaction with CAP-Gly domain-containing proteins such as CLIP1, CLIP2 and DCTN1. Tyrosination regulates the initiation of dynein-dynactin motility via interaction with DCTN1, which brings the dynein-dynactin complex into contact with microtubules. In neurons, tyrosinated tubulins mediate the initiation of retrograde vesicle transport. Post-translationally, detyrosination is involved in metaphase plate congression by guiding chromosomes during mitosis: detyrosination promotes interaction with CENPE, promoting pole-proximal transport of chromosomes toward the equator. Detyrosination increases microtubules-dependent mechanotransduction in dystrophic cardiac and skeletal muscle. In cardiomyocytes, detyrosinated microtubules are required to resist to contractile compression during contraction: detyrosination promotes association with desmin (DES) at force-generating sarcomeres, leading to buckled microtubules and mechanical resistance to contraction.

It localises to the cytoplasm. Its subcellular location is the cytoskeleton. The protein localises to the flagellum axoneme. It carries out the reaction GTP + H2O = GDP + phosphate + H(+). Its function is as follows. Tubulin is the major constituent of microtubules, protein filaments consisting of alpha- and beta-tubulin heterodimers. Microtubules grow by the addition of GTP-tubulin dimers to the microtubule end, where a stabilizing cap forms. Below the cap, tubulin dimers are in GDP-bound state, owing to GTPase activity of alpha-tubulin. The chain is Tubulin alpha-1A chain (TUBA1A) from Sus scrofa (Pig).